The following is an 802-amino-acid chain: Fibroblast growth factor receptor 3 (802 aa).

Residues Pro27 to Thr115 enclose the Ig-like C2-type 1 domain. A disulfide bond links Cys52 and Cys98. Asn74, Asn87, and Asn109 each carry an N-linked (GlcNAc...) asparagine glycan. The tract at residues Asp116–Met148 is disordered. Over residues Gly121–Asp136 the composition is skewed to acidic residues. The span at Arg137–Met148 shows a compositional bias: basic and acidic residues. Ig-like C2-type domains are found at residues Pro140–Asp233 and Pro242–His342. Cysteines 165 and 217 form a disulfide. N-linked (GlcNAc...) asparagine glycosylation is found at Asn214, Asn251, Asn283, Asn303, and Asn315. Cysteines 264 and 326 form a disulfide. A helical transmembrane segment spans residues Ile363–Ile383. Topologically, residues Thr384–Thr802 are cytoplasmic. Residues Leu462–Leu751 enclose the Protein kinase domain. ATP-binding positions include Leu468 to Val476 and Lys498. Asp607 (proton acceptor) is an active-site residue. A phosphotyrosine; by autocatalysis mark is found at Tyr637, Tyr638, Tyr714, and Tyr750.

Belongs to the protein kinase superfamily. Tyr protein kinase family. Fibroblast growth factor receptor subfamily. Monomer. Homodimer after ligand binding. Autophosphorylated. Binding of FGF family members together with heparan sulfate proteoglycan or heparin promotes receptor dimerization and autophosphorylation on tyrosine residues. Autophosphorylation occurs in trans between the two FGFR molecules present in the dimer.

The protein resides in the cell membrane. It carries out the reaction L-tyrosyl-[protein] + ATP = O-phospho-L-tyrosyl-[protein] + ADP + H(+). With respect to regulation, present in an inactive conformation in the absence of bound ligand. Ligand binding leads to dimerization and activation by autophosphorylation on tyrosine residues. In terms of biological role, tyrosine-protein kinase that acts as a cell-surface receptor for fibroblast growth factors and plays an essential role in the regulation of cell proliferation, differentiation and apoptosis. Plays an essential role in the regulation of chondrocyte differentiation, proliferation and apoptosis, and is required for normal skeleton development. Regulates both osteogenesis and postnatal bone mineralization by osteoblasts. Promotes apoptosis in chondrocytes, but can also promote cancer cell proliferation. Phosphorylates PLCG1, CBL and FRS2. Ligand binding leads to the activation of several signaling cascades. Activation of PLCG1 leads to the production of the cellular signaling molecules diacylglycerol and inositol 1,4,5-trisphosphate. Phosphorylation of FRS2 triggers recruitment of GRB2, GAB1, PIK3R1 and SOS1, and mediates activation of RAS, MAPK1/ERK2, MAPK3/ERK1 and the MAP kinase signaling pathway, as well as of the AKT1 signaling pathway. In Xenopus laevis (African clawed frog), this protein is Fibroblast growth factor receptor 3 (fgfr3).